Consider the following 772-residue polypeptide: Endoplasmic reticulum membrane sensor NFE2L1 (772 aa).

A helical; Signal-anchor for type II membrane protein transmembrane segment spans residues 7 to 24 (YFTEGLIQFTILLSLIGV). The cholesterol recognition/amino acid consensus (CRAC) region stretch occupies residues 191–199 (IFDYSHRQK). Residues 198 to 216 (QKESEVDKELSDGRERGDG) show a composition bias toward basic and acidic residues. Residues 198–223 (QKESEVDKELSDGRERGDGWRSAGGQ) form a disordered region. N-linked (GlcNAc...) asparagine glycans are attached at residues Asn-332, Asn-340, Asn-362, Asn-402, Asn-407, Asn-414, Asn-425, and Asn-429. The segment at 472-531 (EEEFDSDSGLSLDSGHSPASLSSSEASSSSSSSSSSSSSSSSSSSSFSEEGAVGYSSDSE) is disordered. A compositionally biased stretch (low complexity) spans 478 to 519 (DSGLSLDSGHSPASLSSSEASSSSSSSSSSSSSSSSSSSSFS). Asn-574 carries N-linked (GlcNAc...) asparagine glycosylation. Positions 581 to 613 (PGTLDPEEPKLPSVGKKSSKEKPSEFLDKQMSR) are disordered. A compositionally biased stretch (basic and acidic residues) spans 598-613 (SSKEKPSEFLDKQMSR). The region spanning 654-717 (LIRDIRRRGK…RQMKQKVQNL (64 aa)) is the bZIP domain. Residues 656–675 (RDIRRRGKNKMAAQNCRKRK) are basic motif. The segment at 682 to 696 (LERDVEDLQRDKSKL) is leucine-zipper. The short motif at 761-768 (RRQERKQK) is the Nuclear localization signal element.

This sequence belongs to the bZIP family. CNC subfamily. Interacts (via the bZIP domain) with small MAF protein (MAFF, MAFG or MAFK); required for binding to antioxidant response elements (AREs) on DNA. Post-translationally, cleaved at Leu-104 following retrotranslocation, releasing the protein from the endoplasmic reticulum membrane and forming the transcription factor NRF1 that translocates into the nucleus.

The protein localises to the endoplasmic reticulum membrane. It is found in the nucleus. Its function is as follows. Endoplasmic reticulum membrane sensor that translocates into the nucleus in response to various stresses to act as a transcription factor. Constitutes a precursor of the transcription factor NRF1. Able to detect various cellular stresses, such as cholesterol excess, oxidative stress or proteasome inhibition. In response to stress, it is released from the endoplasmic reticulum membrane following cleavage and translocates into the nucleus to form the transcription factor NRF1. Acts as a key sensor of cholesterol excess: in excess cholesterol conditions, the endoplasmic reticulum membrane form of the protein directly binds cholesterol via its CRAC motif, preventing cleavage and release of the transcription factor NRF1, thereby allowing expression of genes promoting cholesterol removal. Involved in proteasome homeostasis: in response to proteasome inhibition, it is released from the endoplasmic reticulum membrane, translocates to the nucleus and activates expression of genes encoding proteasome subunits. Functionally, CNC-type bZIP family transcription factor that translocates to the nucleus and regulates expression of target genes in response to various stresses. Heterodimerizes with small-Maf proteins (MAFF, MAFG or MAFK) and binds DNA motifs including the antioxidant response elements (AREs), which regulate expression of genes involved in oxidative stress response. Activates or represses expression of target genes, depending on the context. Plays a key role in cholesterol homeostasis by acting as a sensor of cholesterol excess: in low cholesterol conditions, translocates into the nucleus and represses expression of genes involved in defense against cholesterol excess. In excess cholesterol conditions, the endoplasmic reticulum membrane form of the protein directly binds cholesterol via its CRAC motif, preventing cleavage and release of the transcription factor NRF1, thereby allowing expression of genes promoting cholesterol removal. Critical for redox balance in response to oxidative stress: acts by binding the AREs motifs on promoters and mediating activation of oxidative stress response genes. Involved in proteasome homeostasis: in response to proteasome inhibition, mediates the 'bounce-back' of proteasome subunits by translocating into the nucleus and activating expression of genes encoding proteasome subunits. This is Endoplasmic reticulum membrane sensor NFE2L1 from Gallus gallus (Chicken).